A 928-amino-acid polypeptide reads, in one-letter code: Mitogen-activated protein kinase kinase kinase dlk-1 (928 aa).

The segment at 1–72 (MTSTTMVTTL…GQKEGSPDPK (72 aa)) is disordered. Residues 42–52 (LVTQSAPNTPI) show a composition bias toward polar residues. Residues 53–69 (QHREQANAEFGQKEGSP) are compositionally biased toward basic and acidic residues. One can recognise a Protein kinase domain in the interval 135–377 (ISELEWLGSG…FSHIRQHWEI (243 aa)). Residues 141–149 (LGSGSQGAV) and Lys-162 each bind ATP. The active-site Proton acceptor is the Asp-246. The leucine-zipper stretch occupies residues 459–480 (LQGCFTELKLKESELAEWEKDL). Disordered stretches follow at residues 483–575 (REQW…DAIR), 644–696 (RRVS…PSRN), and 802–845 (ENAN…SMES). The segment covering 509-519 (GYDDMSSDEDV) has biased composition (acidic residues). Over residues 530-557 (SNTSSSSGVQSSPFSRQSSSRSSAGQQT) the composition is skewed to low complexity. The tract at residues 605–814 (SAGAGSCTAI…NDVDLTSSMD (210 aa)) is important for interaction between isoform a and isoform c. The span at 647 to 656 (STSVNKSTAV) shows a compositional bias: polar residues. Positions 677–695 (SCSSPRSSSKLNRSSYPSR) are enriched in low complexity. A compositionally biased stretch (acidic residues) spans 823–833 (ADVESSEEDEG). Phosphoserine is present on residues Ser-874 and Ser-878. The short motif at 874-879 (SDGLSD) is the SDGLSD hexapeptide element.

The protein belongs to the protein kinase superfamily. STE Ser/Thr protein kinase family. MAP kinase kinase kinase subfamily. In terms of assembly, homooligomer (via leucine zipper domain and hexapeptide motif). Isoform a (via leucine zipper domain) forms a heterooligomer with isoform c (via leucine zipper domain). Isoform c does not self-associate. It depends on Mg(2+) as a cofactor. Ubiquitinated by rpm-1. Negatively regulated by ubiquitination by fsn-1 bound rpm-1, followed by degradation. In terms of processing, phosphorylation at Ser-874 and/or at Ser-878 abolishes interaction with isoform c and promotes binding to isoform a kinase domain (likely in trans) resulting in isoform a self-association and activation. Expressed in nerve ring, nerve cord, neurons, and pharynx.

The protein resides in the synapse. The protein localises to the cytoplasm. Its subcellular location is the cell projection. It localises to the axon. It is found in the dendrite. The protein resides in the cilium. It carries out the reaction L-seryl-[protein] + ATP = O-phospho-L-seryl-[protein] + ADP + H(+). The enzyme catalyses L-threonyl-[protein] + ATP = O-phospho-L-threonyl-[protein] + ADP + H(+). With respect to regulation, inactive when associated with isoform c. Dissociation from isoform c, which is dependent on the phosphorylation of the C-terminal hexapeptide, results in self-association and activation. Transient increase in Ca(2+) levels caused by axonal injury or synaptic activity triggers the dissociation of isoform a from isoform c; the dissociation may be influenced by the phosphorylation status of the C-terminal hexapeptide. Component of a MAP kinase pathway that functions presynaptically to regulate synaptic architecture and presynaptic differentiation. Phosphorylates and activates mkk-4. Has a role in axonal regrowth following injury and synaptogenesis. Plays a role in modulating polymerization of neuronal microtubules. Also promotes tubulin post-translational modifications that protect microtubules. Plays a role in cilium length regulation, possibly by reducing rab-5 mediated endocytosis, and may also have a role in intraflagellar transport in cilia. Plays a role in the formation of muscle connections, also called muscle arm extensions, between the body wall and the motor axons in the dorsal and ventral cord. In terms of biological role, has a role in synapse and axon development, and in axonal regrowth following injury. Functionally, by forming heterooligomers with isoform a, acts as an inhibitor of isoform a activation. Its inhibitory function is independent of its catalytic activity. This chain is Mitogen-activated protein kinase kinase kinase dlk-1 (dlk-1), found in Caenorhabditis elegans.